Consider the following 390-residue polypeptide: Succinate--CoA ligase [ADP-forming] subunit beta (390 aa).

The 236-residue stretch at 9 to 244 (KEIFRKYGVP…LDEEEPTEVE (236 aa)) folds into the ATP-grasp domain. Residues Lys46, 53–55 (GRG), Glu99, Ala102, and Glu107 each bind ATP. Residues Asn199 and Asp213 each coordinate Mg(2+). Substrate is bound by residues Asn264 and 321–323 (GIV).

The protein belongs to the succinate/malate CoA ligase beta subunit family. In terms of assembly, heterotetramer of two alpha and two beta subunits. It depends on Mg(2+) as a cofactor.

It catalyses the reaction succinate + ATP + CoA = succinyl-CoA + ADP + phosphate. It carries out the reaction GTP + succinate + CoA = succinyl-CoA + GDP + phosphate. It functions in the pathway carbohydrate metabolism; tricarboxylic acid cycle; succinate from succinyl-CoA (ligase route): step 1/1. Functionally, succinyl-CoA synthetase functions in the citric acid cycle (TCA), coupling the hydrolysis of succinyl-CoA to the synthesis of either ATP or GTP and thus represents the only step of substrate-level phosphorylation in the TCA. The beta subunit provides nucleotide specificity of the enzyme and binds the substrate succinate, while the binding sites for coenzyme A and phosphate are found in the alpha subunit. The polypeptide is Succinate--CoA ligase [ADP-forming] subunit beta (Nautilia profundicola (strain ATCC BAA-1463 / DSM 18972 / AmH)).